A 396-amino-acid polypeptide reads, in one-letter code: Actin-related protein 6 (396 aa).

An N-acetylthreonine modification is found at T2. K260 is modified (N6-acetyllysine).

It belongs to the actin family. ARP6 subfamily. As to quaternary structure, component of the chromatin-remodeling SRCAP complex composed of at least SRCAP, DMAP1, RUVBL1, RUVBL2, ACTL6A, YEATS4, ACTR6 and ZNHIT1. Interacts with CBX1, CBX3 and CBX5.

The protein localises to the cytoplasm. The protein resides in the cytoskeleton. It localises to the nucleus. Its subcellular location is the nucleolus. In terms of biological role, required for formation and/or maintenance of proper nucleolar structure and function. Plays a dual role in the regulation of ribosomal DNA (rDNA) transcription. In the presence of high glucose, maintains active rDNA transcription through H2A.Z deposition and under glucose starvation, is required for the repression of rDNA transcription, and this function may be independent of H2A.Z. This Mus musculus (Mouse) protein is Actin-related protein 6 (Actr6).